The following is a 238-amino-acid chain: MCTLEKRGDLFLLTLTGEDEHRFHPDTIASVLSLLEQAKSQSTKGSVLITTGHGKFFSNGFDLAWAQSAGHGAIKRMHQMVKSFKPVLAALLDLPMPTIAALNGHAAASGLMFALSHDYVFMRKDRGVLYMSEVDIGLPVPDYFSALVVAKVGSGIARRELLLSGKKLKGEEAVALGIVDSAAHDSAEGVVEATVSLGESLAAKKWNGEVYATIRKSLYPELCRMVDLTANNLATHNL.

The protein belongs to the enoyl-CoA hydratase/isomerase family.

Its subcellular location is the cytoplasm. It localises to the nucleus. The catalysed reaction is a (3Z)-enoyl-CoA = a 4-saturated (2E)-enoyl-CoA. The enzyme catalyses a (3E)-enoyl-CoA = a 4-saturated (2E)-enoyl-CoA. It participates in lipid metabolism; fatty acid beta-oxidation. Functionally, able to isomerize both 3-cis and 3-trans double bonds into the 2-trans form in a range of enoyl-CoA species. Essential for the beta oxidation of unsaturated fatty acids. The protein is Enoyl-CoA delta isomerase 3 of Arabidopsis thaliana (Mouse-ear cress).